A 943-amino-acid polypeptide reads, in one-letter code: Isoleucine--tRNA ligase (943 aa).

A 'HIGH' region motif is present at residues 58–68 (PYANGKIHIGH). Position 567 (E567) interacts with L-isoleucyl-5'-AMP. Residues 608–612 (KMSKS) carry the 'KMSKS' region motif. Position 611 (K611) interacts with ATP. The Zn(2+) site is built by C906, C909, C926, and C929.

This sequence belongs to the class-I aminoacyl-tRNA synthetase family. IleS type 1 subfamily. Monomer. Zn(2+) is required as a cofactor.

The protein localises to the cytoplasm. The enzyme catalyses tRNA(Ile) + L-isoleucine + ATP = L-isoleucyl-tRNA(Ile) + AMP + diphosphate. Functionally, catalyzes the attachment of isoleucine to tRNA(Ile). As IleRS can inadvertently accommodate and process structurally similar amino acids such as valine, to avoid such errors it has two additional distinct tRNA(Ile)-dependent editing activities. One activity is designated as 'pretransfer' editing and involves the hydrolysis of activated Val-AMP. The other activity is designated 'posttransfer' editing and involves deacylation of mischarged Val-tRNA(Ile). This Pseudomonas entomophila (strain L48) protein is Isoleucine--tRNA ligase.